Reading from the N-terminus, the 179-residue chain is Signal peptidase complex catalytic subunit SEC11A (179 aa).

At 1–16 (MLSLDFLDDVRRMNKR) the chain is on the cytoplasmic side. The chain crosses the membrane as a helical; Signal-anchor for type II membrane protein span at residues 17-36 (QLYYQVLNFGMIVSSALMIW). Residues 37–179 (KGLMLITGSE…LGLFVLVHRE (143 aa)) lie on the Lumenal side of the membrane. Residues serine 56, histidine 96, and aspartate 122 each act as charge relay system in the active site. The segment at 165-176 (AVLFLLGLFVLV) is C-terminal short (CTS) helix.

The protein belongs to the peptidase S26B family. As to quaternary structure, component of the signal peptidase complex paralog A (SPC-A) composed of a catalytic subunit SEC11A and three accessory subunits SPCS1, SPCS2 and SPCS3. Within the complex, interacts with SPCS2 and SPCS3. The complex induces a local thinning of the ER membrane which is used to measure the length of the signal peptide (SP) h-region of protein substrates. This ensures the selectivity of the complex towards h-regions shorter than 18-20 amino acids.

It is found in the endoplasmic reticulum membrane. The catalysed reaction is Cleavage of hydrophobic, N-terminal signal or leader sequences from secreted and periplasmic proteins.. In terms of biological role, catalytic component of the signal peptidase complex (SPC) which catalyzes the cleavage of N-terminal signal sequences from nascent proteins as they are translocated into the lumen of the endoplasmic reticulum. Specifically cleaves N-terminal signal peptides that contain a hydrophobic alpha-helix (h-region) shorter than 18-20 amino acids. The protein is Signal peptidase complex catalytic subunit SEC11A (Sec11a) of Rattus norvegicus (Rat).